We begin with the raw amino-acid sequence, 211 residues long: Redox-sensing transcriptional repressor Rex (211 aa).

The H-T-H motif DNA-binding region spans 17–56; that stretch reads LYYRLVSILKGKGIDRVNSKTISEALQIDSATIRRDFSYF. 91–96 lines the NAD(+) pocket; that stretch reads GIGNLG.

Belongs to the transcriptional regulatory Rex family. In terms of assembly, homodimer.

Its subcellular location is the cytoplasm. In terms of biological role, modulates transcription in response to changes in cellular NADH/NAD(+) redox state. The protein is Redox-sensing transcriptional repressor Rex of Staphylococcus epidermidis (strain ATCC 12228 / FDA PCI 1200).